Consider the following 447-residue polypeptide: Argininosuccinate synthase (447 aa).

ATP is bound by residues 20–28 (AFSGGLDTS) and alanine 46. Position 102 (tyrosine 102) interacts with L-citrulline. Positions 132 and 134 each coordinate ATP. Threonine 134, asparagine 138, and aspartate 139 together coordinate L-aspartate. Asparagine 138 provides a ligand contact to L-citrulline. Position 139 (aspartate 139) interacts with ATP. The L-citrulline site is built by arginine 142 and serine 195. Aspartate 197 lines the ATP pocket. 3 residues coordinate L-citrulline: threonine 204, glutamate 206, and glutamate 283.

The protein belongs to the argininosuccinate synthase family. Type 2 subfamily. In terms of assembly, homotetramer.

It is found in the cytoplasm. It catalyses the reaction L-citrulline + L-aspartate + ATP = 2-(N(omega)-L-arginino)succinate + AMP + diphosphate + H(+). Its pathway is amino-acid biosynthesis; L-arginine biosynthesis; L-arginine from L-ornithine and carbamoyl phosphate: step 2/3. In Neisseria meningitidis serogroup C / serotype 2a (strain ATCC 700532 / DSM 15464 / FAM18), this protein is Argininosuccinate synthase.